Here is a 492-residue protein sequence, read N- to C-terminus: 3,6-anhydro-alpha-L-galactose dehydrogenase (492 aa).

NADP(+) contacts are provided by residues 160–161, 184–187, and 237–238; these read WN, KPSE, and GS. The active-site Proton acceptor is the glutamate 259. Leucine 260 serves as a coordination point for NADP(+). The Nucleophile role is filled by cysteine 293. Glutamate 394 provides a ligand contact to NADP(+).

The protein belongs to the aldehyde dehydrogenase family.

It catalyses the reaction 3,6-anhydro-alpha-L-galactopyranose + NADP(+) + H2O = 3,6-anhydro-L-galactonate + NADPH + 2 H(+). With respect to regulation, significantly inhibited by EDTA. Activity is enhanced by Fe(2+), but is strongly inhibited by Mn(2+), Cu(2+), Zn(2+), Ni(2+) and Co(2+). Functionally, involved in the degradation of 3,6-anhydro-L-galactose, which is the major monomeric sugar of red macroalgae. Catalyzes the oxidation of 3,6-anhydro-L-galactose (AHG) to form 3,6-anhydrogalactonate (AHGA). Shows broad substrate specificity, with maximum activity toward AHG. The enzyme activities toward D-fructose, D-galactose and D-ribose are between 40% and 50% of the maximum, but those toward L-rhamnose, L-glyceraldehyde, D-glyceraldehyde, L-fucose and D-glucose are much lower. The protein is 3,6-anhydro-alpha-L-galactose dehydrogenase of Streptomyces coelicolor (strain ATCC BAA-471 / A3(2) / M145).